Consider the following 103-residue polypeptide: Carboxysome shell protein CsoS1 (103 aa).

The region spanning 9 to 94 is the BMC domain; the sequence is ALGMIETRGL…PHREVEPALG (86 aa).

It belongs to the bacterial microcompartments protein family. CsoS1 subfamily. In terms of assembly, homohexamer with a small central pore. Forms a CsoS2-CsoS1-RuBisCO complex.

It localises to the carboxysome. In terms of biological role, one of the shell proteins of the carboxysome, a polyhedral inclusion where RuBisCO (ribulose bisphosphate carboxylase, ccbL-ccbS) is sequestered. Assembles into hexamers which make sheets that form the facets of the polyhedral carboxysome. The polypeptide is Carboxysome shell protein CsoS1 (Prochlorococcus marinus (strain MIT 9313)).